A 914-amino-acid polypeptide reads, in one-letter code: Alanine--tRNA ligase (914 aa).

Residues His613, His617, Cys717, and His721 each coordinate Zn(2+).

It belongs to the class-II aminoacyl-tRNA synthetase family. It depends on Zn(2+) as a cofactor.

Its subcellular location is the cytoplasm. It catalyses the reaction tRNA(Ala) + L-alanine + ATP = L-alanyl-tRNA(Ala) + AMP + diphosphate. Its function is as follows. Catalyzes the attachment of alanine to tRNA(Ala) in a two-step reaction: alanine is first activated by ATP to form Ala-AMP and then transferred to the acceptor end of tRNA(Ala). Also edits incorrectly charged Ser-tRNA(Ala) and Gly-tRNA(Ala) via its editing domain. The polypeptide is Alanine--tRNA ligase (Pyrococcus abyssi (strain GE5 / Orsay)).